The following is a 461-amino-acid chain: Ig heavy chain C region, membrane-bound form (461 aa).

The CH1 stretch occupies residues 1-99; sequence ATPSPPTLYG…GESVWIKEIP (99 aa). A CH2 region spans residues 100 to 205; the sequence is DCKGDKVHPT…TQSRNITGSQ (106 aa). N-linked (GlcNAc...) asparagine glycosylation is found at asparagine 164, asparagine 200, asparagine 245, asparagine 275, asparagine 374, asparagine 411, asparagine 415, and asparagine 437. Residues 206–308 are CH3; it reads VPCSCNDPVI…PLRASIHKEE (103 aa). A CH4 region spans residues 309–418; the sequence is VKDLREPSVS…IINRTVNKSS (110 aa). Residues 438–458 traverse the membrane as a helical segment; it reads ASTFIILFFLSIFYRAAVTLV.

The protein localises to the cell membrane. The chain is Ig heavy chain C region, membrane-bound form from Heterodontus francisci (Horn shark).